Here is a 216-residue protein sequence, read N- to C-terminus: MMNKIHKNNRGVLIVISGPSGAGKGTICKALLEKHDDIFISVSATTRNPRVGEVDGVNYHFLTKEEFKQRIAEDDFLEHAEVYGNYYGTPKSSVEKMLDEGKNVILEIDIQGALKVKEKATDGVFIFILPPSMEELKQRIIKRGSETPESLMTRFKSAYKEINYVSKYNYAVVNDNVEDAVKKIEAILLAEKCRVDRLKENLLESKEDEMHEQLYD.

The Guanylate kinase-like domain occupies 11-189; that stretch reads GVLIVISGPS…AVKKIEAILL (179 aa). 18-25 contributes to the ATP binding site; the sequence is GPSGAGKG.

This sequence belongs to the guanylate kinase family.

The protein resides in the cytoplasm. The enzyme catalyses GMP + ATP = GDP + ADP. Its function is as follows. Essential for recycling GMP and indirectly, cGMP. The protein is Guanylate kinase of Clostridium perfringens (strain SM101 / Type A).